The chain runs to 304 residues: MVTIVFDHPAEDFPELKIAGEFTNWEGVPMKINTSSGKWEYKFDESSVTKHNDKDKVHFKFIDQNGNWFADDEYPKEVDEHSNENNVATLNNEEDGGSAGEEKDEGDKTAHNTNENGSELYYEGPETPTPSLKGNVTFPSPKTAISQDGSAFAKETTRKERKYEHAPLNEVPVERDPKEENKELSPNFSQEQTENKQDKGLDNLSEGNDNDNTRVNEDTDVTDTQESEHEINGSDTENTDMSEQEEIQKIDKPADQNAKSIVKEGDANTEDYESVLKKLLGALGRFFGSWFSWLTTKMSSSEAS.

Positions 72-269 are disordered; it reads DEYPKEVDEH…SIVKEGDANT (198 aa). Positions 73–83 are enriched in basic and acidic residues; the sequence is EYPKEVDEHSN. The span at 129–149 shows a compositional bias: polar residues; it reads TPSLKGNVTFPSPKTAISQDG. Ser-140 is subject to Phosphoserine. Over residues 155–183 the composition is skewed to basic and acidic residues; sequence ETTRKERKYEHAPLNEVPVERDPKEENKE. Phosphoserine occurs at positions 185 and 205.

In terms of assembly, interacts with ULP1.

It localises to the endoplasmic reticulum membrane. Its subcellular location is the mitochondrion outer membrane. The protein resides in the nucleus envelope. The chain is ULP1-interacting protein 4 (UIP4) from Saccharomyces cerevisiae (strain ATCC 204508 / S288c) (Baker's yeast).